A 120-amino-acid polypeptide reads, in one-letter code: Large ribosomal subunit protein eL34 (120 aa).

Belongs to the eukaryotic ribosomal protein eL34 family.

This Pisum sativum (Garden pea) protein is Large ribosomal subunit protein eL34 (RPL34).